A 115-amino-acid polypeptide reads, in one-letter code: Yop proteins translocation protein M (115 aa).

Positions histidine 19–glutamine 38 are disordered. A compositionally biased stretch (polar residues) spans threonine 27–glutamine 38.

Its function is as follows. Belongs to an operon involved in the translocation of Yop proteins across the bacterial membranes or in the specific control of this function. This chain is Yop proteins translocation protein M (yscM), found in Yersinia pestis.